Reading from the N-terminus, the 359-residue chain is Cytosolic sulfotransferase 15 (359 aa).

Residue 101–106 (KSGTTW) coordinates 3'-phosphoadenylyl sulfate. Residue His168 is the Proton acceptor of the active site. 3'-phosphoadenylyl sulfate contacts are provided by residues Arg190, Ser198, Tyr256, and 322–324 (RKG).

Belongs to the sulfotransferase 1 family. Expressed in leaves.

The protein localises to the cytoplasm. The catalysed reaction is a 12-hydroxyjasmonate + 3'-phosphoadenylyl sulfate = a 12-sulfojasmonate + adenosine 3',5'-bisphosphate + H(+). In terms of biological role, sulfotransferase that utilizes 3'-phospho-5'-adenylyl sulfate (PAPS) as sulfonate donor to specifically catalyze the sulfate conjugation of hydroxyjasmonates, with a preference for 12-hydroxyjasmonate over 11-hydroxyjasmonate. No activity with 12-hydroxyjasmonic acid methyl ester, cucurbic acid, 7-iso-cucurbic acid, 6-epi-cucurbic acid, 6-epi-7-iso-cucurbic acid and their methyl esters, prostaglandin E2, arachidonyl alcohol and 11-eicosenol. This chain is Cytosolic sulfotransferase 15 (SOT15), found in Arabidopsis thaliana (Mouse-ear cress).